A 94-amino-acid chain; its full sequence is Viral macrophage inflammatory protein 2 (94 aa).

Positions 1–20 (MDTKGILLVAVLTALLCLQS) are cleaved as a signal peptide. 2 disulfide bridges follow: Cys-34/Cys-58 and Cys-35/Cys-74.

It belongs to the intercrine beta (chemokine CC) family. As to quaternary structure, monomer. Interacts with human chemokine receptor CXCR4.

The protein resides in the secreted. Blocks infection by several different human immunodeficiency virus type 1 (HIV-1) strains. This occurs because vMIP-II binds to a wide range of chemokine receptors. May form part of the response to host defenses contributing to virus-induced neoplasia and may have relevance to KSHV and HIV-I interactions. This Human herpesvirus 8 type P (isolate GK18) (HHV-8) protein is Viral macrophage inflammatory protein 2 (ORF K4).